A 273-amino-acid polypeptide reads, in one-letter code: DnaJ homolog subfamily C member 27 (273 aa).

GTP-binding positions include glycine 23–serine 30, aspartate 71–histidine 75, and asparagine 134–aspartate 137. Residues aspartate 217–lysine 273 enclose the J domain.

The protein belongs to the small GTPase superfamily. Rab family.

The protein resides in the nucleus. GTPase possibly involved in regulation of the MEK/ERK pathway. The polypeptide is DnaJ homolog subfamily C member 27 (dnajc27) (Danio rerio (Zebrafish)).